An 875-amino-acid chain; its full sequence is Cell surface glycoprotein (875 aa).

The signal sequence occupies residues 1 to 23; the sequence is MTNTKQKINAVFLSALMVMSVFA. The segment covering 137 to 157 has biased composition (polar residues); the sequence is EVQNGGSGDVTGSTLQTSSSG. Disordered regions lie at residues 137–158 and 197–217; these read EVQN…SSGP and LPTA…DFDV. Residues 205–216 show a composition bias toward low complexity; it reads DNGASGSNGDFD. Asparagine 253 carries N-linked (GlcNAc...) asparagine glycosylation. The disordered stretch occupies residues 380 to 414; sequence YPASDSSNDGYASGGSHASSVTVRDTDGDGTDDSE. Polar residues predominate over residues 383–402; sequence SDSSNDGYASGGSHASSVTV. 4 N-linked (GlcNAc...) asparagine glycosylation sites follow: asparagine 455, asparagine 563, asparagine 715, and asparagine 774. The interval 794 to 852 is disordered; it reads EAGSLEEEQPDTETPEPDTETPEPDTETPEPDTETPEPDTETPEPDTETEEATTEASGP. Residues 797-846 show a composition bias toward acidic residues; sequence SLEEEQPDTETPEPDTETPEPDTETPEPDTETPEPDTETPEPDTETEEAT. Residues 851–875 traverse the membrane as a helical segment; that stretch reads GPGFTAAIALIALVAAALLAVRRDN. A PGF sorting signal motif is present at residues 852–854; that stretch reads PGF.

The protein belongs to the halobacterial S-layer protein family. Asn-455 is glycosylated by a pentasaccharide comprising a hexose, 2 hexuronic acids, a methyl ester of a hexuronic acid and a final hexose. The complete pentasaccharide is first assembled on dolichol phosphate and then transferred the glycan to the target Asn. In terms of processing, cleaved by the archaeosortase ArtA at the C-terminus, with removal of a short hydrophobic segment. Post-translationally, lipidation.

Its subcellular location is the secreted. The protein resides in the cell wall. It is found in the S-layer. The protein localises to the cell membrane. Its function is as follows. S-layer protein. The S-layer is a paracrystalline mono-layered assembly of proteins which coat the surface of the cell. The polypeptide is Cell surface glycoprotein (csg1) (Haloarcula marismortui (strain ATCC 43049 / DSM 3752 / JCM 8966 / VKM B-1809) (Halobacterium marismortui)).